Reading from the N-terminus, the 457-residue chain is Siroheme synthase (457 aa).

Positions 1–204 (MDHLPIFCQL…NDQKAITETT (204 aa)) are precorrin-2 dehydrogenase /sirohydrochlorin ferrochelatase. Residues 22–23 (DV) and 43–44 (LA) contribute to the NAD(+) site. Position 128 is a phosphoserine (S128). Residues 216 to 457 (GEVVLVGAGP…RDKLNWFSNH (242 aa)) are uroporphyrinogen-III C-methyltransferase. S-adenosyl-L-methionine is bound at residue P225. Catalysis depends on D248, which acts as the Proton acceptor. The Proton donor role is filled by K270. Residues 301 to 303 (GGD), I306, 331 to 332 (TA), M382, and G411 contribute to the S-adenosyl-L-methionine site.

In the N-terminal section; belongs to the precorrin-2 dehydrogenase / sirohydrochlorin ferrochelatase family. The protein in the C-terminal section; belongs to the precorrin methyltransferase family.

It catalyses the reaction uroporphyrinogen III + 2 S-adenosyl-L-methionine = precorrin-2 + 2 S-adenosyl-L-homocysteine + H(+). It carries out the reaction precorrin-2 + NAD(+) = sirohydrochlorin + NADH + 2 H(+). The enzyme catalyses siroheme + 2 H(+) = sirohydrochlorin + Fe(2+). It participates in cofactor biosynthesis; adenosylcobalamin biosynthesis; precorrin-2 from uroporphyrinogen III: step 1/1. The protein operates within cofactor biosynthesis; adenosylcobalamin biosynthesis; sirohydrochlorin from precorrin-2: step 1/1. It functions in the pathway porphyrin-containing compound metabolism; siroheme biosynthesis; precorrin-2 from uroporphyrinogen III: step 1/1. Its pathway is porphyrin-containing compound metabolism; siroheme biosynthesis; siroheme from sirohydrochlorin: step 1/1. It participates in porphyrin-containing compound metabolism; siroheme biosynthesis; sirohydrochlorin from precorrin-2: step 1/1. Its function is as follows. Multifunctional enzyme that catalyzes the SAM-dependent methylations of uroporphyrinogen III at position C-2 and C-7 to form precorrin-2 via precorrin-1. Then it catalyzes the NAD-dependent ring dehydrogenation of precorrin-2 to yield sirohydrochlorin. Finally, it catalyzes the ferrochelation of sirohydrochlorin to yield siroheme. This Escherichia coli O157:H7 (strain EC4115 / EHEC) protein is Siroheme synthase.